A 295-amino-acid chain; its full sequence is Alpha-ketoglutarate-dependent sulfate ester dioxygenase (295 aa).

H71 is a binding site for substrate. Fe cation-binding residues include H98 and D100. V101 serves as a coordination point for substrate. T125 provides a ligand contact to 2-oxoglutarate. H252 contacts Fe cation. The 2-oxoglutarate site is built by R263 and R267.

It belongs to the TfdA dioxygenase family. Fe(2+) is required as a cofactor.

The catalysed reaction is a primary linear alkyl sulfate ester + 2-oxoglutarate + O2 = an aldehyde + sulfate + succinate + CO2 + H(+). It catalyses the reaction 2-ethylhexyl sulfate + 2-oxoglutarate + O2 = 2-ethylhexanal + sulfate + succinate + CO2 + H(+). The enzyme catalyses hexyl sulfate + 2-oxoglutarate + O2 = hexanal + sulfate + succinate + CO2 + H(+). It carries out the reaction pentyl sulfate + 2-oxoglutarate + O2 = pentanal + sulfate + succinate + CO2 + H(+). The catalysed reaction is heptyl sulfate + 2-oxoglutarate + O2 = heptanal + sulfate + succinate + CO2 + H(+). Functionally, alpha-ketoglutarate-dependent sulfate ester dioxygenase, which oxidizes medium-chain alkyl-sulfate esters. Shows preference for 2-ethylhexyl sulfate (2-EHS) in vitro, leading to the formation of succinate and 2-ethylhexanal. Has likely a role in sulfate scavenging in vivo. In terms of biological role, also causes the inactivation of the 2-carboxyquinoxaline Ty38c (an antitubercular compound that inhibits DprE1) via oxidative decarboxylation, using Ty38c instead of alpha-ketoglutarate as a substrate. Is thus responsible for primary resistance of M.tuberculosis to Ty38c in vitro. Overexpression of Rv3406 causes resistance to Ty38c. The polypeptide is Alpha-ketoglutarate-dependent sulfate ester dioxygenase (Mycobacterium tuberculosis (strain ATCC 25618 / H37Rv)).